Reading from the N-terminus, the 470-residue chain is Cysteine--tRNA ligase (470 aa).

Cysteine 27 serves as a coordination point for Zn(2+). Residues proline 29–asparagine 39 carry the 'HIGH' region motif. The Zn(2+) site is built by cysteine 207, histidine 232, and glutamate 236. Residues lysine 265 to serine 269 carry the 'KMSKS' region motif. ATP is bound at residue lysine 268.

Belongs to the class-I aminoacyl-tRNA synthetase family. Monomer. It depends on Zn(2+) as a cofactor.

Its subcellular location is the cytoplasm. The catalysed reaction is tRNA(Cys) + L-cysteine + ATP = L-cysteinyl-tRNA(Cys) + AMP + diphosphate. The sequence is that of Cysteine--tRNA ligase from Rubrobacter xylanophilus (strain DSM 9941 / JCM 11954 / NBRC 16129 / PRD-1).